Consider the following 214-residue polypeptide: Phosphatidylserine decarboxylase proenzyme (214 aa).

Ser-182 serves as the catalytic Schiff-base intermediate with substrate; via pyruvic acid. Ser-182 is subject to Pyruvic acid (Ser); by autocatalysis.

This sequence belongs to the phosphatidylserine decarboxylase family. PSD-A subfamily. Heterodimer of a large membrane-associated beta subunit and a small pyruvoyl-containing alpha subunit. The cofactor is pyruvate. Is synthesized initially as an inactive proenzyme. Formation of the active enzyme involves a self-maturation process in which the active site pyruvoyl group is generated from an internal serine residue via an autocatalytic post-translational modification. Two non-identical subunits are generated from the proenzyme in this reaction, and the pyruvate is formed at the N-terminus of the alpha chain, which is derived from the carboxyl end of the proenzyme. The post-translation cleavage follows an unusual pathway, termed non-hydrolytic serinolysis, in which the side chain hydroxyl group of the serine supplies its oxygen atom to form the C-terminus of the beta chain, while the remainder of the serine residue undergoes an oxidative deamination to produce ammonia and the pyruvoyl prosthetic group on the alpha chain.

It localises to the cell membrane. The catalysed reaction is a 1,2-diacyl-sn-glycero-3-phospho-L-serine + H(+) = a 1,2-diacyl-sn-glycero-3-phosphoethanolamine + CO2. Its pathway is phospholipid metabolism; phosphatidylethanolamine biosynthesis; phosphatidylethanolamine from CDP-diacylglycerol: step 2/2. In terms of biological role, catalyzes the formation of phosphatidylethanolamine (PtdEtn) from phosphatidylserine (PtdSer). This is Phosphatidylserine decarboxylase proenzyme from Burkholderia vietnamiensis (strain G4 / LMG 22486) (Burkholderia cepacia (strain R1808)).